The chain runs to 259 residues: UPF0246 protein VF_2109 (259 aa).

The protein belongs to the UPF0246 family.

This chain is UPF0246 protein VF_2109, found in Aliivibrio fischeri (strain ATCC 700601 / ES114) (Vibrio fischeri).